The following is a 181-amino-acid chain: Inner membrane-spanning protein YciB (181 aa).

5 helical membrane-spanning segments follow: residues 10-30 (LVIF…GALI), 50-70 (MHLI…ILHD), 80-100 (IVYA…KPIL), 118-138 (VTWY…YVAF), and 148-168 (FKVF…VFYL).

It belongs to the YciB family.

It localises to the cell inner membrane. In terms of biological role, plays a role in cell envelope biogenesis, maintenance of cell envelope integrity and membrane homeostasis. This is Inner membrane-spanning protein YciB from Shewanella piezotolerans (strain WP3 / JCM 13877).